The sequence spans 380 residues: Lipid-A-disaccharide synthase (380 aa).

This sequence belongs to the LpxB family.

It catalyses the reaction a lipid X + a UDP-2-N,3-O-bis[(3R)-3-hydroxyacyl]-alpha-D-glucosamine = a lipid A disaccharide + UDP + H(+). Its pathway is bacterial outer membrane biogenesis; LPS lipid A biosynthesis. In terms of biological role, condensation of UDP-2,3-diacylglucosamine and 2,3-diacylglucosamine-1-phosphate to form lipid A disaccharide, a precursor of lipid A, a phosphorylated glycolipid that anchors the lipopolysaccharide to the outer membrane of the cell. This Pseudomonas syringae pv. syringae (strain B728a) protein is Lipid-A-disaccharide synthase.